Here is a 181-residue protein sequence, read N- to C-terminus: Isopentenyl-diphosphate Delta-isomerase (181 aa).

2 residues coordinate Mn(2+): His25 and His32. A Nudix hydrolase domain is found at 30-164; that stretch reads PLHLAFSCWL…PWAFSPWMVM (135 aa). Cys67 is a catalytic residue. Residue Cys67 coordinates Mg(2+). His69 provides a ligand contact to Mn(2+). Glu87 serves as a coordination point for Mg(2+). Glu114 and Glu116 together coordinate Mn(2+). Glu116 is an active-site residue.

This sequence belongs to the IPP isomerase type 1 family. Homodimer. Mg(2+) is required as a cofactor. Requires Mn(2+) as cofactor.

The protein localises to the cytoplasm. It carries out the reaction isopentenyl diphosphate = dimethylallyl diphosphate. The protein operates within isoprenoid biosynthesis; dimethylallyl diphosphate biosynthesis; dimethylallyl diphosphate from isopentenyl diphosphate: step 1/1. Catalyzes the 1,3-allylic rearrangement of the homoallylic substrate isopentenyl (IPP) to its highly electrophilic allylic isomer, dimethylallyl diphosphate (DMAPP). This chain is Isopentenyl-diphosphate Delta-isomerase, found in Salmonella typhi.